A 122-amino-acid polypeptide reads, in one-letter code: Large ribosomal subunit protein uL14 (122 aa).

This sequence belongs to the universal ribosomal protein uL14 family. Part of the 50S ribosomal subunit. Forms a cluster with proteins L3 and L19. In the 70S ribosome, L14 and L19 interact and together make contacts with the 16S rRNA in bridges B5 and B8.

Binds to 23S rRNA. Forms part of two intersubunit bridges in the 70S ribosome. This is Large ribosomal subunit protein uL14 from Pseudomonas savastanoi pv. phaseolicola (strain 1448A / Race 6) (Pseudomonas syringae pv. phaseolicola (strain 1448A / Race 6)).